The primary structure comprises 335 residues: Holliday junction branch migration complex subunit RuvB (335 aa).

A large ATPase domain (RuvB-L) region spans residues 4 to 183 (ADNLNVTSII…FGIVQRLEFY (180 aa)). ATP-binding positions include Arg-23, Gly-64, Lys-67, Thr-68, Thr-69, 130 to 132 (EDY), Arg-173, Tyr-183, and Arg-220. Residue Thr-68 participates in Mg(2+) binding. The segment at 184–254 (PTKDLQNIIS…VAMNALNMLN (71 aa)) is small ATPAse domain (RuvB-S). The segment at 257 to 335 (TAGFNFMDRQ…HFSLKQSRDI (79 aa)) is head domain (RuvB-H). DNA-binding residues include Arg-293, Arg-312, and Arg-317.

The protein belongs to the RuvB family. Homohexamer. Forms an RuvA(8)-RuvB(12)-Holliday junction (HJ) complex. HJ DNA is sandwiched between 2 RuvA tetramers; dsDNA enters through RuvA and exits via RuvB. An RuvB hexamer assembles on each DNA strand where it exits the tetramer. Each RuvB hexamer is contacted by two RuvA subunits (via domain III) on 2 adjacent RuvB subunits; this complex drives branch migration. In the full resolvosome a probable DNA-RuvA(4)-RuvB(12)-RuvC(2) complex forms which resolves the HJ.

It is found in the cytoplasm. It carries out the reaction ATP + H2O = ADP + phosphate + H(+). Functionally, the RuvA-RuvB-RuvC complex processes Holliday junction (HJ) DNA during genetic recombination and DNA repair, while the RuvA-RuvB complex plays an important role in the rescue of blocked DNA replication forks via replication fork reversal (RFR). RuvA specifically binds to HJ cruciform DNA, conferring on it an open structure. The RuvB hexamer acts as an ATP-dependent pump, pulling dsDNA into and through the RuvAB complex. RuvB forms 2 homohexamers on either side of HJ DNA bound by 1 or 2 RuvA tetramers; 4 subunits per hexamer contact DNA at a time. Coordinated motions by a converter formed by DNA-disengaged RuvB subunits stimulates ATP hydrolysis and nucleotide exchange. Immobilization of the converter enables RuvB to convert the ATP-contained energy into a lever motion, pulling 2 nucleotides of DNA out of the RuvA tetramer per ATP hydrolyzed, thus driving DNA branch migration. The RuvB motors rotate together with the DNA substrate, which together with the progressing nucleotide cycle form the mechanistic basis for DNA recombination by continuous HJ branch migration. Branch migration allows RuvC to scan DNA until it finds its consensus sequence, where it cleaves and resolves cruciform DNA. This Baumannia cicadellinicola subsp. Homalodisca coagulata protein is Holliday junction branch migration complex subunit RuvB.